We begin with the raw amino-acid sequence, 473 residues long: Mogroside IIIx synthase (473 aa).

The active-site Proton acceptor is H43. D142 serves as the catalytic Charge relay. Residues S293, Q356, W374, N375, S376, E379, D395, and Q396 each coordinate UDP-alpha-D-glucose.

This sequence belongs to the UDP-glycosyltransferase family. Highly expressed in mature fruits.

The enzyme catalyses mogroside IIE + UDP-alpha-D-glucose = mogroside IIIX + UDP + H(+). The catalysed reaction is mogroside III + UDP-alpha-D-glucose = mogroside IV + UDP + H(+). It carries out the reaction mogroside III + UDP-alpha-D-glucose = siamenoside I + UDP + H(+). It catalyses the reaction mogroside IIIX + UDP-alpha-D-glucose = mogroside IVA + UDP + H(+). The enzyme catalyses mogroside IIIX + UDP-alpha-D-glucose = siamenoside I + UDP + H(+). The catalysed reaction is mogroside IV + UDP-alpha-D-glucose = mogroside V + UDP + H(+). It carries out the reaction siamenoside I + UDP-alpha-D-glucose = mogroside V + UDP + H(+). It catalyses the reaction mogroside V + UDP-alpha-D-glucose = mogroside VI + UDP + H(+). It participates in secondary metabolite biosynthesis; terpenoid biosynthesis. With respect to regulation, activity is increased by Mg(2+). UDP-glycosyltransferase involved in the biosynthesis of cucurbitacin and mogroside tetracyclic triterpene natural products (e.g. siamenoside I and mogrosides IV, V and VI). Cucurbitacins have cytotoxic properties and exhibit deterrent taste as a defense barrier against herbivores. Mogrosides are nonsugar highly oxygenated compounds used as high-intensity zero-calorie sweeteners; they also possess pharmacological properties such as regulating immunity, lowering blood sugar and lipid levels, protecting the liver, and acting as antioxidants and antitumor agents. In terms of biological role, catalyzes the branched glucosylations of mogroside II-E, mogroside III, mogroside IIIx, mogroside IV, mogroside IV-A, siamenoside I and mogroside V, ending in the production of mogroside VI. Functionally, catalyzes the beta(1-6) branched glucosylations of mogroside II-E to produce mogroside IIIx by forming a beta(1-6) glycosidic bond with the 6-hydroxyl of glucose 1-C24; a subsequent glycosylation at glucose 1-C3 leads to the formation of mogroside IV-A with beta(1-6) glycosidic bond. Can also use mogroside III-E, mogroside III-A, mogroside IV-E and mogroside IV-A as substrates. The protein is Mogroside IIIx synthase of Siraitia grosvenorii (Monk's fruit).